The sequence spans 29 residues: Phospholemman-like protein (29 aa).

This sequence belongs to the FXYD family. Post-translationally, phosphorylated by protein kinase C.

The protein localises to the membrane. In terms of biological role, induces a hyperpolarization-activated chloride current when expressed in Xenopus oocytes. This chain is Phospholemman-like protein, found in Scyliorhinus canicula (Small-spotted catshark).